A 187-amino-acid polypeptide reads, in one-letter code: Elongation factor P (187 aa).

Belongs to the elongation factor P family.

The protein localises to the cytoplasm. The protein operates within protein biosynthesis; polypeptide chain elongation. In terms of biological role, involved in peptide bond synthesis. Stimulates efficient translation and peptide-bond synthesis on native or reconstituted 70S ribosomes in vitro. Probably functions indirectly by altering the affinity of the ribosome for aminoacyl-tRNA, thus increasing their reactivity as acceptors for peptidyl transferase. In Kocuria rhizophila (strain ATCC 9341 / DSM 348 / NBRC 103217 / DC2201), this protein is Elongation factor P.